An 80-amino-acid chain; its full sequence is Styelin-C (80 aa).

The N-terminal stretch at 1-22 (MQMKATILIVLVALFMIQQSEA) is a signal peptide. W24 is modified (6'-bromotryptophan). L53 carries the leucine amide modification. The propeptide at 55–80 (DMTDEEFQEFMQDIEQAREEELLSRQ) is removed in mature form.

It localises to the secreted. Functionally, bactericidal against several Gram-positive and Gram-negative bacteria. In Styela clava (Sea squirt), this protein is Styelin-C.